We begin with the raw amino-acid sequence, 77 residues long: Cell division topological specificity factor (77 aa).

It belongs to the MinE family.

Functionally, prevents the cell division inhibition by proteins MinC and MinD at internal division sites while permitting inhibition at polar sites. This ensures cell division at the proper site by restricting the formation of a division septum at the midpoint of the long axis of the cell. This chain is Cell division topological specificity factor, found in Helicobacter pylori (strain P12).